The chain runs to 103 residues: Auxin-responsive protein SAUR50 (103 aa).

It belongs to the ARG7 family.

Its function is as follows. Effector of hormonal and environmental signals in plant growth. Involved in heliotropism. The chain is Auxin-responsive protein SAUR50 from Helianthus annuus (Common sunflower).